Here is a 211-residue protein sequence, read N- to C-terminus: Allatostatins MIP (211 aa).

The first 24 residues, 1–24 (MAHTKTRRTYGFLMVLLILGSACG), serve as a signal peptide directing secretion. Positions 25–63 (NLVASGSAGSPPSNEPGGGGLSEQVVLDQLSESDLYGNN) are excised as a propeptide. Position 74 is a tryptophan amide (W74). Residues 78–148 (SSSGDVSDPD…DDLAGEPDVE (71 aa)) constitute a propeptide that is removed on maturation. The span at 115 to 135 (ASGQSAQQQQQQPLQQQSQSG) shows a compositional bias: low complexity. The segment at 115–142 (ASGQSAQQQQQQPLQQQSQSGEDFDDLA) is disordered. 4 positions are modified to tryptophan amide: W159, W175, W189, and W202. Positions 168–190 (WNKFRGAWGKREPTWNNLKGMWG) are disordered. Residues 206–211 (SQLPSN) constitute a propeptide that is removed on maturation.

In terms of tissue distribution, in larvae, strongly expressed in the midgut region before and in between the copper cells, and in a group of cells in the posterior part of the larval midgut. Expressed in the neurons of many areas including the subesophageal ganglion/tritocerebrum (SOG), olfactory glomeruli, lateral ventral protocerebrum, mushroom body, the optic lobe medulla and in the antennal lobes.

The protein localises to the secreted. In terms of biological role, ligand for the sex peptide receptor (SPR). Stabilizes sleep and maintains sleep homeostasis to inhibit the activity of wake-promoting circuits, such as those that involve the pigment dispersing factor (pdf) neurons. Regulated by the circadian clock network and pathways associated with a sleep homeostat. May also have a regulatory role in gut motility. The protein is Allatostatins MIP (Mip) of Drosophila melanogaster (Fruit fly).